The primary structure comprises 397 residues: Tryptophan synthase beta chain (397 aa).

An N6-(pyridoxal phosphate)lysine modification is found at lysine 91.

Belongs to the TrpB family. Tetramer of two alpha and two beta chains. It depends on pyridoxal 5'-phosphate as a cofactor.

The enzyme catalyses (1S,2R)-1-C-(indol-3-yl)glycerol 3-phosphate + L-serine = D-glyceraldehyde 3-phosphate + L-tryptophan + H2O. Its pathway is amino-acid biosynthesis; L-tryptophan biosynthesis; L-tryptophan from chorismate: step 5/5. Its function is as follows. The beta subunit is responsible for the synthesis of L-tryptophan from indole and L-serine. This chain is Tryptophan synthase beta chain, found in Bacillus thuringiensis (strain Al Hakam).